The chain runs to 149 residues: Golgi apparatus membrane protein tvp-18 (149 aa).

N11 carries N-linked (GlcNAc...) asparagine glycosylation. 4 helical membrane-spanning segments follow: residues 18–38 (WLGI…IFTF), 41–61 (IIIV…FVEV), 84–103 (NYTR…LSCI), and 108–128 (SLLV…LAAL).

The protein belongs to the TVP18 family.

It is found in the golgi apparatus membrane. Golgi membrane protein involved in vesicular trafficking. This Neurospora crassa (strain ATCC 24698 / 74-OR23-1A / CBS 708.71 / DSM 1257 / FGSC 987) protein is Golgi apparatus membrane protein tvp-18 (tvp-18).